We begin with the raw amino-acid sequence, 216 residues long: uncharacterized protein (216 aa).

This is an uncharacterized protein from Methylophilus leisingeri (strain DSM 6813 / VKM B-2013 / DM11).